Reading from the N-terminus, the 356-residue chain is tRNA N6-adenosine threonylcarbamoyltransferase (356 aa).

Residues His-116 and His-120 each coordinate Fe cation. Residues 139-143 (IVSGG), Asp-174, Gly-187, Asp-191, and Asn-281 each bind substrate. Fe cation is bound at residue Asp-309.

The protein belongs to the KAE1 / TsaD family. Fe(2+) is required as a cofactor.

It is found in the cytoplasm. It carries out the reaction L-threonylcarbamoyladenylate + adenosine(37) in tRNA = N(6)-L-threonylcarbamoyladenosine(37) in tRNA + AMP + H(+). Its function is as follows. Required for the formation of a threonylcarbamoyl group on adenosine at position 37 (t(6)A37) in tRNAs that read codons beginning with adenine. Is involved in the transfer of the threonylcarbamoyl moiety of threonylcarbamoyl-AMP (TC-AMP) to the N6 group of A37, together with TsaE and TsaB. TsaD likely plays a direct catalytic role in this reaction. The polypeptide is tRNA N6-adenosine threonylcarbamoyltransferase (Frankia alni (strain DSM 45986 / CECT 9034 / ACN14a)).